The sequence spans 404 residues: Zinc finger CCCH domain-containing protein 15 homolog (404 aa).

Residues 1–10 (MPPKKAPPGP) are compositionally biased toward pro residues. The interval 1-71 (MPPKKAPPGP…KRKEEKEKKL (71 aa)) is disordered. A compositionally biased stretch (basic and acidic residues) spans 12–28 (KKTEQKKKEKVIEDKTF). The segment covering 38-50 (QQKFIQQVQKQVQ) has biased composition (low complexity). Residues 56-71 (PRQDGDKRKEEKEKKL) show a composition bias toward basic and acidic residues. C3H1-type zinc fingers lie at residues 94-121 (DPKS…HDLS) and 165-202 (PTTD…HALP). Position 218 is a phosphothreonine (Thr218). A Phosphoserine modification is found at Ser221. Positions 246–270 (LAWKKRKIAEKKAKLAAEEERKKSD) form a coiled coil. Low complexity-rich tracts occupy residues 352–361 (EAAKTAAAED) and 369–380 (PSSSAPANDAAP). The tract at residues 352–380 (EAAKTAAAEDAAADEDGPSSSAPANDAAP) is disordered.

This sequence belongs to the ZC3H15/TMA46 family.

This is Zinc finger CCCH domain-containing protein 15 homolog from Drosophila melanogaster (Fruit fly).